The primary structure comprises 487 residues: Adenosylhomocysteinase (487 aa).

3 residues coordinate substrate: threonine 76, aspartate 151, and glutamate 212. Residue 213 to 215 (TTT) coordinates NAD(+). Residues lysine 242 and aspartate 246 each contribute to the substrate site. NAD(+)-binding positions include asparagine 247, 276 to 281 (GYGDVG), glutamate 299, asparagine 334, 355 to 357 (IGH), and asparagine 403.

Belongs to the adenosylhomocysteinase family. Requires NAD(+) as cofactor.

Its subcellular location is the cytoplasm. It carries out the reaction S-adenosyl-L-homocysteine + H2O = L-homocysteine + adenosine. It participates in amino-acid biosynthesis; L-homocysteine biosynthesis; L-homocysteine from S-adenosyl-L-homocysteine: step 1/1. Functionally, may play a key role in the regulation of the intracellular concentration of adenosylhomocysteine. This chain is Adenosylhomocysteinase, found in Bacteroides fragilis (strain YCH46).